We begin with the raw amino-acid sequence, 360 residues long: MTEQKVRKELKTDMPSIYSFELHEMKEWLKEQDEKPFRAAQIFEWLYEKRVTSFDAMSNLSKELREKLKAQFAITTLKTVIKQTSQDGTIKFLFELHDGYTIETVLMRHEYGNSVCVTTQVGCRIGCTFCASTLGGLKRNLEAGEIVAQVLKVQQALDETDERVSSVVIMGIGEPFDNFEEMLAFLKIINHDNGLNIGARHITVSTSGIIPKIYQFADEQMQINFAVSLHAPNTEIRSRLMPINKAYKLPKLMEAIEYYIQKTGRRVSFEYGLFGGVNDQVHHAEELADLLKGIKCHVNLIPVNYVPERDYVRTPREQIFLFEKTLKERGVNVTIRREQGHDIDAACGQLRAKERQEETR.

Glu-103 serves as the catalytic Proton acceptor. In terms of domain architecture, Radical SAM core spans 109–342 (HEYGNSVCVT…VTIRREQGHD (234 aa)). A disulfide bridge links Cys-116 with Cys-347. Cys-123, Cys-127, and Cys-130 together coordinate [4Fe-4S] cluster. S-adenosyl-L-methionine-binding positions include 173–174 (GE), Ser-205, 228–230 (SLH), and Asn-304. Cys-347 functions as the S-methylcysteine intermediate in the catalytic mechanism.

The protein belongs to the radical SAM superfamily. RlmN family. The cofactor is [4Fe-4S] cluster.

The protein localises to the cytoplasm. The enzyme catalyses adenosine(2503) in 23S rRNA + 2 reduced [2Fe-2S]-[ferredoxin] + 2 S-adenosyl-L-methionine = 2-methyladenosine(2503) in 23S rRNA + 5'-deoxyadenosine + L-methionine + 2 oxidized [2Fe-2S]-[ferredoxin] + S-adenosyl-L-homocysteine. It carries out the reaction adenosine(37) in tRNA + 2 reduced [2Fe-2S]-[ferredoxin] + 2 S-adenosyl-L-methionine = 2-methyladenosine(37) in tRNA + 5'-deoxyadenosine + L-methionine + 2 oxidized [2Fe-2S]-[ferredoxin] + S-adenosyl-L-homocysteine. Specifically methylates position 2 of adenine 2503 in 23S rRNA and position 2 of adenine 37 in tRNAs. This chain is Probable dual-specificity RNA methyltransferase RlmN, found in Bacillus pumilus (strain SAFR-032).